The sequence spans 89 residues: Small ribosomal subunit protein uS19 (89 aa).

It belongs to the universal ribosomal protein uS19 family.

In terms of biological role, protein S19 forms a complex with S13 that binds strongly to the 16S ribosomal RNA. This chain is Small ribosomal subunit protein uS19, found in Xanthomonas axonopodis pv. citri (strain 306).